The primary structure comprises 127 residues: Group 3 truncated hemoglobin ctb (127 aa).

Heme contacts are provided by Tyr-64 and His-72.

Belongs to the truncated hemoglobin family. Group III subfamily. In terms of assembly, monomer. Heme is required as a cofactor.

It is found in the cytoplasm. Its function is as follows. Has been suggested to be involved in cytochrome c peroxidase or P450-like oxygen chemistry or cyanide detoxification. The high oxygen affinity of this protein suggests that it probably does not function as an oxygen transporter. The sequence is that of Group 3 truncated hemoglobin ctb (ctb) from Campylobacter jejuni subsp. jejuni serotype O:2 (strain ATCC 700819 / NCTC 11168).